We begin with the raw amino-acid sequence, 335 residues long: Putative zinc metalloprotease CPE1693 (335 aa).

Histidine 17 provides a ligand contact to Zn(2+). Residue glutamate 18 is part of the active site. Histidine 21 serves as a coordination point for Zn(2+). Helical transmembrane passes span 88-110, 262-284, and 312-334; these read ILVMGAGAFMNYVLALIIFIGLA, LLWFMAFLSVQLAVFNLLPFPAL, and TVGFMLLMGLMVLVTIKDIIFPI. The region spanning 96–174 is the PDZ domain; that stretch reads FMNYVLALII…PVELEIKRGN (79 aa).

It belongs to the peptidase M50B family. Zn(2+) is required as a cofactor.

The protein resides in the cell membrane. This Clostridium perfringens (strain 13 / Type A) protein is Putative zinc metalloprotease CPE1693.